We begin with the raw amino-acid sequence, 368 residues long: Phosphate acyltransferase (368 aa).

The disordered stretch occupies residues 337 to 368 (LGEGEHNAGGAGHASPAAGHHAEPSAAQSSKA). Residues 349 to 368 (HASPAAGHHAEPSAAQSSKA) show a composition bias toward low complexity.

It belongs to the PlsX family. As to quaternary structure, homodimer. Probably interacts with PlsY.

It localises to the cytoplasm. The enzyme catalyses a fatty acyl-[ACP] + phosphate = an acyl phosphate + holo-[ACP]. It functions in the pathway lipid metabolism; phospholipid metabolism. Catalyzes the reversible formation of acyl-phosphate (acyl-PO(4)) from acyl-[acyl-carrier-protein] (acyl-ACP). This enzyme utilizes acyl-ACP as fatty acyl donor, but not acyl-CoA. The chain is Phosphate acyltransferase from Burkholderia lata (strain ATCC 17760 / DSM 23089 / LMG 22485 / NCIMB 9086 / R18194 / 383).